We begin with the raw amino-acid sequence, 190 residues long: Dynein axonemal light chain 1 (190 aa).

Residue Ala-2 is modified to N-acetylalanine. LRR repeat units follow at residues 49–70 (NCEK…NGLK), 71–92 (NLRI…EAVG), 94–115 (TLEE…HIMK), and 116–137 (KLKI…VKLA). Ser-56 carries the phosphoserine modification. Residues 150-190 (NPLEEKHSAENNWIEEATKRVPKLKKLDGTPVIKGDEEEDN) form the LRRCT domain.

The protein belongs to the dynein light chain LC1-type family. In terms of assembly, interacts with ZMYND10 (via C-terminus). Interacts with DNAH5, a outer arm dynein heavy chain. Interacts with tubulin located within the A-tubule of the outer doublets in a ATP-independent manner. Expressed in tissues carrying motile cilia such as respiratory epithelia, ependyma and testis.

The protein resides in the cytoplasm. It localises to the cytoskeleton. Its subcellular location is the cilium axoneme. Its function is as follows. Part of the multisubunit axonemal ATPase complexes that generate the force for cilia motility and govern beat frequency. Component of the outer arm dynein (ODA). May be involved in a mechanosensory feedback mechanism controlling ODA activity based on external conformational cues by tethering the outer arm dynein heavy chain (DNAH5) to the microtubule within the axoneme. Important for ciliary function in the airways and for the function of the cilia that produce the nodal flow essential for the determination of the left-right asymmetry. This chain is Dynein axonemal light chain 1, found in Homo sapiens (Human).